The following is a 295-amino-acid chain: Bifunctional protein FolD (295 aa).

Residues 166–168, Ser191, and Ile232 contribute to the NADP(+) site; that span reads GRS.

Belongs to the tetrahydrofolate dehydrogenase/cyclohydrolase family. As to quaternary structure, homodimer.

It catalyses the reaction (6R)-5,10-methylene-5,6,7,8-tetrahydrofolate + NADP(+) = (6R)-5,10-methenyltetrahydrofolate + NADPH. It carries out the reaction (6R)-5,10-methenyltetrahydrofolate + H2O = (6R)-10-formyltetrahydrofolate + H(+). The protein operates within one-carbon metabolism; tetrahydrofolate interconversion. Catalyzes the oxidation of 5,10-methylenetetrahydrofolate to 5,10-methenyltetrahydrofolate and then the hydrolysis of 5,10-methenyltetrahydrofolate to 10-formyltetrahydrofolate. The chain is Bifunctional protein FolD from Rhodopseudomonas palustris (strain BisB18).